The sequence spans 764 residues: 5-methyltetrahydropteroyltriglutamate--homocysteine methyltransferase (764 aa).

Residues 16 to 19 (RELK) and lysine 121 contribute to the 5-methyltetrahydropteroyltri-L-glutamate site. Residues 440–442 (IGS) and glutamate 493 contribute to the L-homocysteine site. Residues 440–442 (IGS) and glutamate 493 contribute to the L-methionine site. 5-methyltetrahydropteroyltri-L-glutamate contacts are provided by residues 524 to 525 (RC) and tryptophan 570. Aspartate 608 provides a ligand contact to L-homocysteine. Aspartate 608 provides a ligand contact to L-methionine. Glutamate 614 is a binding site for 5-methyltetrahydropteroyltri-L-glutamate. The Zn(2+) site is built by histidine 650, cysteine 652, and glutamate 674. Histidine 703 acts as the Proton donor in catalysis. Cysteine 735 serves as a coordination point for Zn(2+).

The protein belongs to the vitamin-B12 independent methionine synthase family. Zn(2+) serves as cofactor.

The catalysed reaction is 5-methyltetrahydropteroyltri-L-glutamate + L-homocysteine = tetrahydropteroyltri-L-glutamate + L-methionine. Its pathway is amino-acid biosynthesis; L-methionine biosynthesis via de novo pathway; L-methionine from L-homocysteine (MetE route): step 1/1. In terms of biological role, catalyzes the transfer of a methyl group from 5-methyltetrahydrofolate to homocysteine resulting in methionine formation. This Burkholderia orbicola (strain MC0-3) protein is 5-methyltetrahydropteroyltriglutamate--homocysteine methyltransferase.